Reading from the N-terminus, the 398-residue chain is Phosphoglycerate kinase (398 aa).

Residues 21 to 23 (DFN), arginine 36, 59 to 62 (HLGR), arginine 119, and arginine 157 contribute to the substrate site. Residues lysine 208, glycine 296, glutamate 327, and 354-357 (GGDS) contribute to the ATP site.

The protein belongs to the phosphoglycerate kinase family. As to quaternary structure, monomer.

It localises to the cytoplasm. It catalyses the reaction (2R)-3-phosphoglycerate + ATP = (2R)-3-phospho-glyceroyl phosphate + ADP. It functions in the pathway carbohydrate degradation; glycolysis; pyruvate from D-glyceraldehyde 3-phosphate: step 2/5. In Streptococcus equi subsp. zooepidemicus (strain MGCS10565), this protein is Phosphoglycerate kinase.